Reading from the N-terminus, the 127-residue chain is Mediator of RNA polymerase II transcription subunit 31 (127 aa).

This sequence belongs to the Mediator complex subunit 31 family. As to quaternary structure, component of the Mediator complex, which is composed of at least 21 subunits that form three structurally distinct submodules. The Mediator head module contains MED6, MED8, MED11, SRB4/MED17, SRB5/MED18, ROX3/MED19, SRB2/MED20 and SRB6/MED22, the middle module contains MED1, MED4, NUT1/MED5, MED7, CSE2/MED9, NUT2/MED10, SRB7/MED21 and SOH1/MED31, and the tail module contains MED2, PGD1/MED3, RGR1/MED14, GAL11/MED15 and SIN4/MED16. The head and the middle modules interact directly with RNA polymerase II, whereas the elongated tail module interacts with gene-specific regulatory proteins.

The protein resides in the nucleus. Its function is as follows. Component of the Mediator complex, a coactivator involved in the regulated transcription of nearly all RNA polymerase II-dependent genes. Mediator functions as a bridge to convey information from gene-specific regulatory proteins to the basal RNA polymerase II transcription machinery. The Mediator complex, having a compact conformation in its free form, is recruited to promoters by direct interactions with regulatory proteins and serves for the assembly of a functional preinitiation complex with RNA polymerase II and the general transcription factors. The Mediator complex unfolds to an extended conformation and partially surrounds RNA polymerase II, specifically interacting with the unphosphorylated form of the C-terminal domain (CTD) of RNA polymerase II. The Mediator complex dissociates from the RNA polymerase II holoenzyme and stays at the promoter when transcriptional elongation begins. This chain is Mediator of RNA polymerase II transcription subunit 31 (SOH1), found in Saccharomyces cerevisiae (strain ATCC 204508 / S288c) (Baker's yeast).